A 98-amino-acid chain; its full sequence is Cystatin-B (98 aa).

Residue Met-1 is modified to N-acetylmethionine. The Secondary area of contact signature appears at 46-50 (QIVAG).

This sequence belongs to the cystatin family. In terms of tissue distribution, widely expressed. Highest expression in heart, liver and kidney. Lower levels in brain, lung and skeletal muscle. Lowest levels in spleen and testis.

Its subcellular location is the cytoplasm. In terms of biological role, this is an intracellular thiol proteinase inhibitor. In Mus musculus (Mouse), this protein is Cystatin-B (Cstb).